The chain runs to 301 residues: Dihydroorotate dehydrogenase B (NAD(+)), catalytic subunit (301 aa).

Residues lysine 44, 68 to 72 (NAMGL), and asparagine 122 each bind substrate. Position 44 to 45 (44 to 45 (KS)) interacts with FMN. Asparagine 122 serves as a coordination point for FMN. The active-site Nucleophile is cysteine 125. Lysine 160 and isoleucine 186 together coordinate FMN. Residue 187–188 (NT) participates in substrate binding. FMN-binding positions include glycine 212, 238 to 239 (GG), and 260 to 261 (GS).

It belongs to the dihydroorotate dehydrogenase family. Type 1 subfamily. Heterotetramer of 2 PyrK and 2 PyrD type B subunits. The cofactor is FMN.

The protein localises to the cytoplasm. The enzyme catalyses (S)-dihydroorotate + NAD(+) = orotate + NADH + H(+). It functions in the pathway pyrimidine metabolism; UMP biosynthesis via de novo pathway; orotate from (S)-dihydroorotate (NAD(+) route): step 1/1. Functionally, catalyzes the conversion of dihydroorotate to orotate with NAD(+) as electron acceptor. This is Dihydroorotate dehydrogenase B (NAD(+)), catalytic subunit (pyrD) from Methanocella arvoryzae (strain DSM 22066 / NBRC 105507 / MRE50).